The following is a 108-amino-acid chain: UPF0060 membrane protein YnfA (108 aa).

Residues 1-5 are Periplasmic-facing; it reads MLKTT. Residues 6–26 traverse the membrane as a helical segment; that stretch reads LLFFVTALCEIIGCFLPWLWI. Residues 27–30 are Cytoplasmic-facing; sequence KRGA. A helical membrane pass occupies residues 31–51; sequence SVWWLLPAAASLALFVWLLTL. The Periplasmic segment spans residues 52–60; sequence HPAASGRVY. Residues 61–81 form a helical membrane-spanning segment; the sequence is AAYGGVYVCTALLWLRVVDGV. The Cytoplasmic segment spans residues 82–84; the sequence is RLT. The chain crosses the membrane as a helical span at residues 85–105; that stretch reads VYDWCGALIALCGMLIIVVGW. Residues 106–108 are Periplasmic-facing; sequence GRT.

The protein belongs to the UPF0060 family.

It localises to the cell inner membrane. This Salmonella paratyphi A (strain ATCC 9150 / SARB42) protein is UPF0060 membrane protein YnfA.